Here is a 342-residue protein sequence, read N- to C-terminus: Dihydroorotate dehydrogenase (quinone) (342 aa).

FMN is bound by residues 65–69 (AGLDK) and threonine 89. Lysine 69 is a binding site for substrate. 114-118 (NRMGF) is a binding site for substrate. FMN contacts are provided by asparagine 142 and asparagine 175. Residue asparagine 175 coordinates substrate. Serine 178 serves as the catalytic Nucleophile. Asparagine 180 provides a ligand contact to substrate. FMN is bound by residues lysine 220 and threonine 248. 249–250 (NT) contributes to the substrate binding site. FMN is bound by residues glycine 271, glycine 300, and 321–322 (YT).

Belongs to the dihydroorotate dehydrogenase family. Type 2 subfamily. In terms of assembly, monomer. It depends on FMN as a cofactor.

It localises to the cell membrane. It catalyses the reaction (S)-dihydroorotate + a quinone = orotate + a quinol. The protein operates within pyrimidine metabolism; UMP biosynthesis via de novo pathway; orotate from (S)-dihydroorotate (quinone route): step 1/1. In terms of biological role, catalyzes the conversion of dihydroorotate to orotate with quinone as electron acceptor. In Burkholderia pseudomallei (strain 668), this protein is Dihydroorotate dehydrogenase (quinone).